A 310-amino-acid chain; its full sequence is O-acetylserine sulfhydrylase (310 aa).

K44 bears the N6-(pyridoxal phosphate)lysine mark. Pyridoxal 5'-phosphate is bound by residues N74, 178–182 (GTGGT), and S266.

It belongs to the cysteine synthase/cystathionine beta-synthase family. In terms of assembly, homodimer. The cofactor is pyridoxal 5'-phosphate.

The catalysed reaction is O-acetyl-L-serine + hydrogen sulfide = L-cysteine + acetate. It participates in amino-acid biosynthesis; L-cysteine biosynthesis; L-cysteine from L-serine: step 2/2. Its function is as follows. Catalyzes the conversion of O-acetylserine (OAS) to cysteine through the elimination of acetate and addition of hydrogen sulfide. The chain is O-acetylserine sulfhydrylase (cysK) from Mycobacterium bovis (strain ATCC BAA-935 / AF2122/97).